We begin with the raw amino-acid sequence, 361 residues long: Septin-2 (361 aa).

Tyr17 is modified (phosphotyrosine). The Septin-type G domain maps to 34–306 (KGFEFTLMVV…ENFRSERLKR (273 aa)). Residues 44–51 (GESGLGKS) form a G1 motif region. GTP-binding positions include 44–51 (GESGLGKS), Thr78, Gly104, and 183–191 (KADTLTLKE). The interval 101–104 (DTPG) is G3 motif. The tract at residues 182 to 185 (AKAD) is G4 motif. Position 190 is an N6-acetyllysine (Lys190). Position 211 is a phosphotyrosine (Tyr211). Ser218 carries the phosphoserine modification. The GTP site is built by Gly241 and Arg256. Residues 260-270 (WGVVEVENPEH) are important for dimerization.

It belongs to the TRAFAC class TrmE-Era-EngA-EngB-Septin-like GTPase superfamily. Septin GTPase family. As to quaternary structure, septins polymerize into heterooligomeric protein complexes that form filaments, and associate with cellular membranes, actin filaments and microtubules. GTPase activity is required for filament formation. Septin filaments are assembled from asymmetrical heterotrimers, composed of SEPTIN2, SEPTIN6 and SEPTIN7 that associate head-to-head to form a hexameric unit. Interaction between SEPTIN2 and SEPTIN7 seems indirect. Also interacts with SEPTIN9 and SEPTIN5. Interaction with SEPTIN4 not detected. Component of a septin core octameric complex consisting of SEPTIN12, SEPTIN7, SEPTIN6 and SEPTIN2 or SEPTIN4 in the order 12-7-6-2-2-6-7-12 or 12-7-6-4-4-6-7-12 and located in the sperm annulus. Interacts with MAP4. Interacts with DZIP1L.

The protein resides in the cytoplasm. It localises to the cytoskeleton. Its subcellular location is the spindle. The protein localises to the cleavage furrow. It is found in the midbody. The protein resides in the cell cortex. It localises to the cell projection. Its subcellular location is the cilium membrane. The protein localises to the cilium. It is found in the flagellum. Filament-forming cytoskeletal GTPase. Forms a filamentous structure with SEPTIN12, SEPTIN6, SEPTIN2 and probably SEPTIN4 at the sperm annulus which is required for the structural integrity and motility of the sperm tail during postmeiotic differentiation. Required for normal organization of the actin cytoskeleton. Plays a role in the biogenesis of polarized columnar-shaped epithelium by maintaining polyglutamylated microtubules, thus facilitating efficient vesicle transport, and by impeding MAP4 binding to tubulin. Required for the progression through mitosis. Forms a scaffold at the midplane of the mitotic splindle required to maintain CENPE localization at kinetochores and consequently chromosome congression. During anaphase, may be required for chromosome segregation and spindle elongation. Plays a role in ciliogenesis and collective cell movements. In cilia, required for the integrity of the diffusion barrier at the base of the primary cilium that prevents diffusion of transmembrane proteins between the cilia and plasma membranes: probably acts by regulating the assembly of the tectonic-like complex (also named B9 complex) by localizing TMEM231 protein. This Rattus norvegicus (Rat) protein is Septin-2.